The chain runs to 120 residues: NADH-quinone oxidoreductase subunit A (120 aa).

Transmembrane regions (helical) follow at residues 10 to 30 (ILVFLGISLFIAVLALTMGWF), 65 to 85 (VAILFIIFDLETAFLFPWAVV), and 89 to 109 (IGWFGFWAMMVFLAILVVGFI).

This sequence belongs to the complex I subunit 3 family. In terms of assembly, NDH-1 is composed of 14 different subunits. Subunits NuoA, H, J, K, L, M, N constitute the membrane sector of the complex.

Its subcellular location is the cell inner membrane. It catalyses the reaction a quinone + NADH + 5 H(+)(in) = a quinol + NAD(+) + 4 H(+)(out). Functionally, NDH-1 shuttles electrons from NADH, via FMN and iron-sulfur (Fe-S) centers, to quinones in the respiratory chain. The immediate electron acceptor for the enzyme in this species is believed to be ubiquinone. Couples the redox reaction to proton translocation (for every two electrons transferred, four hydrogen ions are translocated across the cytoplasmic membrane), and thus conserves the redox energy in a proton gradient. This Coxiella burnetii (strain Dugway 5J108-111) protein is NADH-quinone oxidoreductase subunit A.